Reading from the N-terminus, the 316-residue chain is Methionyl-tRNA formyltransferase (316 aa).

Position 112 to 115 (112 to 115 (SLLP)) interacts with (6S)-5,6,7,8-tetrahydrofolate.

The protein belongs to the Fmt family.

The catalysed reaction is L-methionyl-tRNA(fMet) + (6R)-10-formyltetrahydrofolate = N-formyl-L-methionyl-tRNA(fMet) + (6S)-5,6,7,8-tetrahydrofolate + H(+). Its function is as follows. Attaches a formyl group to the free amino group of methionyl-tRNA(fMet). The formyl group appears to play a dual role in the initiator identity of N-formylmethionyl-tRNA by promoting its recognition by IF2 and preventing the misappropriation of this tRNA by the elongation apparatus. This chain is Methionyl-tRNA formyltransferase, found in Psychromonas ingrahamii (strain DSM 17664 / CCUG 51855 / 37).